Consider the following 207-residue polypeptide: Transcriptional regulatory protein RcsA (207 aa).

The region spanning 131-196 is the HTH luxR-type domain; it reads LTLPTLSLSK…VIYHIVRLTE (66 aa). The H-T-H motif DNA-binding region spans 155–174; the sequence is TSQISTQMNIKAKTVSSHKG.

Belongs to the RcsA family.

Component of the Rcs signaling system, which controls transcription of numerous genes. Binds to DNA to regulate expression of genes. This chain is Transcriptional regulatory protein RcsA, found in Klebsiella aerogenes (Enterobacter aerogenes).